The chain runs to 302 residues: Bifunctional protein FolD (302 aa).

NADP(+) contacts are provided by residues 171–173 (GRS), Ser-196, and Ile-237.

It belongs to the tetrahydrofolate dehydrogenase/cyclohydrolase family. As to quaternary structure, homodimer.

The enzyme catalyses (6R)-5,10-methylene-5,6,7,8-tetrahydrofolate + NADP(+) = (6R)-5,10-methenyltetrahydrofolate + NADPH. It catalyses the reaction (6R)-5,10-methenyltetrahydrofolate + H2O = (6R)-10-formyltetrahydrofolate + H(+). It participates in one-carbon metabolism; tetrahydrofolate interconversion. In terms of biological role, catalyzes the oxidation of 5,10-methylenetetrahydrofolate to 5,10-methenyltetrahydrofolate and then the hydrolysis of 5,10-methenyltetrahydrofolate to 10-formyltetrahydrofolate. This is Bifunctional protein FolD from Sphingopyxis alaskensis (strain DSM 13593 / LMG 18877 / RB2256) (Sphingomonas alaskensis).